Here is a 106-residue protein sequence, read N- to C-terminus: ATP-dependent Clp protease adapter protein ClpS (106 aa).

It belongs to the ClpS family. In terms of assembly, binds to the N-terminal domain of the chaperone ClpA.

Its function is as follows. Involved in the modulation of the specificity of the ClpAP-mediated ATP-dependent protein degradation. This is ATP-dependent Clp protease adapter protein ClpS from Aliivibrio salmonicida (strain LFI1238) (Vibrio salmonicida (strain LFI1238)).